The following is a 348-amino-acid chain: 3-methyl-2-oxobutanoate dehydrogenase subunit beta (348 aa).

Residues Glu51, 80 to 82 (LAE), Gln104, and 108 to 111 (FSYP) each bind thiamine diphosphate. Residues 105–108 (FDGF) and His151 contribute to the substrate site. His151 (proton acceptor) is an active-site residue.

As to quaternary structure, heteromer of E1 alpha (BkdA) and beta (BkdB) subunits. Part of the BCKADH complex, consisting of multiple copies of BkdA/BkdB (E1), BkdC (E2) and Lpd (E3). Thiamine diphosphate serves as cofactor.

The enzyme catalyses N(6)-[(R)-lipoyl]-L-lysyl-[protein] + 3-methyl-2-oxobutanoate + H(+) = N(6)-[(R)-S(8)-2-methylpropanoyldihydrolipoyl]-L-lysyl-[protein] + CO2. Component of the branched-chain alpha-ketoacid dehydrogenase (BCKADH) complex, that catalyzes the overall conversion of branched-chain alpha-ketoacids to acyl-CoA and CO(2). In Mycobacterium tuberculosis (strain CDC 1551 / Oshkosh), this protein is 3-methyl-2-oxobutanoate dehydrogenase subunit beta (bkdB).